Reading from the N-terminus, the 423-residue chain is 26S proteasome regulatory subunit 6A homolog (423 aa).

211-218 (GPPGTGKT) is a binding site for ATP.

This sequence belongs to the AAA ATPase family.

Its subcellular location is the cytoplasm. It is found in the nucleus. Its function is as follows. The 26S proteasome is involved in the ATP-dependent degradation of ubiquitinated proteins. The regulatory (or ATPase) complex confers ATP dependency and substrate specificity to the 26S complex. In Solanum lycopersicum (Tomato), this protein is 26S proteasome regulatory subunit 6A homolog (TBP1).